Reading from the N-terminus, the 445-residue chain is Rab GDP dissociation inhibitor beta (445 aa).

Met1 bears the N-acetylmethionine mark. Lys112 is subject to N6-acetyllysine. Ser130 bears the Phosphoserine mark. Lys269 is modified (N6-acetyllysine). Ser382 is modified (phosphoserine).

This sequence belongs to the Rab GDI family. As to quaternary structure, interacts with RHOH. Interacts with the GDP-bound inactive forms of RAB3A, RAB3B, RAB3C, RAB5A, RAB5B, RAB5C, RAB8A, RAB8B, RAB10, RAB12, RAB35, and RAB43; binds RAB3D to a lesser extent. Interacts with DZIP1; this interaction negatively regulates the interaction of GDI2 with GDP-bound RAB8A.

The protein localises to the cytoplasm. It is found in the membrane. The protein resides in the golgi apparatus. It localises to the trans-Golgi network. GDP-dissociation inhibitor preventing the GDP to GTP exchange of most Rab proteins. By keeping these small GTPases in their inactive GDP-bound form regulates intracellular membrane trafficking. Negatively regulates protein transport to the cilium and ciliogenesis through the inhibition of RAB8A. In Sus scrofa (Pig), this protein is Rab GDP dissociation inhibitor beta (GDI2).